The following is a 573-amino-acid chain: NADH-ubiquinone oxidoreductase chain 5 (573 aa).

The next 16 helical transmembrane spans lie at 4–24 (ISFINLISISLTCFLLSLYYL), 44–64 (IVMTFLFDWMSLLFMSFVLMI), 85–105 (FIMLVLMFVLSMMLLIISPNL), 106–126 (VSILLGWDGLGLVSYCLVIYF), 147–167 (VALLLAIAWMLNYGSWNYIFY), 170–190 (VMQNEFSMLMIGSLVMLAAMT), 212–234 (SALVHSSTLVTAGVYLLIRFNIV), 239–259 (WLGQLLLLLSGLTMFMAGLGA), 268–288 (IIALSTLSQLGLMMSILSMGF), 294–314 (FHLLTHALFKALLFMCAGAII), 337–357 (SACFNVSNLALCGMPFLAGFY), 377–396 (FLYFFSTGLTVSYSFRLVYY), 422–442 (LGLLFMSIIGGSMLNWLIFPF), 452–472 (LKMLTLFVCIVGGLFGYLISI), 487–507 (LTLFLGSMWFMPYISTYGMIF), and 552–572 (LKIYLMLFVFWIMILFSFLLF).

The protein belongs to the complex I subunit 5 family.

The protein localises to the mitochondrion inner membrane. The enzyme catalyses a ubiquinone + NADH + 5 H(+)(in) = a ubiquinol + NAD(+) + 4 H(+)(out). Core subunit of the mitochondrial membrane respiratory chain NADH dehydrogenase (Complex I) that is believed to belong to the minimal assembly required for catalysis. Complex I functions in the transfer of electrons from NADH to the respiratory chain. The immediate electron acceptor for the enzyme is believed to be ubiquinone. This chain is NADH-ubiquinone oxidoreductase chain 5 (mt:ND5), found in Drosophila yakuba (Fruit fly).